Here is a 302-residue protein sequence, read N- to C-terminus: Light-independent protochlorophyllide reductase iron-sulfur ATP-binding protein (302 aa).

Residues 1–10 are compositionally biased toward polar residues; sequence MSTATISPSQ. Residues 1–21 form a disordered region; that stretch reads MSTATISPSQIGRGARPDGEG. ATP is bound by residues 46–51 and Lys-75; that span reads GIGKST. Mg(2+) is bound at residue Ser-50. [4Fe-4S] cluster contacts are provided by Cys-131 and Cys-165. Residues 216–217 and 240–242 contribute to the ATP site; these read NR and PAL.

The protein belongs to the NifH/BchL/ChlL family. As to quaternary structure, homodimer. Protochlorophyllide reductase is composed of three subunits; BchL, BchN and BchB. The cofactor is [4Fe-4S] cluster.

The enzyme catalyses chlorophyllide a + oxidized 2[4Fe-4S]-[ferredoxin] + 2 ADP + 2 phosphate = protochlorophyllide a + reduced 2[4Fe-4S]-[ferredoxin] + 2 ATP + 2 H2O. Its pathway is porphyrin-containing compound metabolism; bacteriochlorophyll biosynthesis (light-independent). In terms of biological role, component of the dark-operative protochlorophyllide reductase (DPOR) that uses Mg-ATP and reduced ferredoxin to reduce ring D of protochlorophyllide (Pchlide) to form chlorophyllide a (Chlide). This reaction is light-independent. The L component serves as a unique electron donor to the NB-component of the complex, and binds Mg-ATP. The polypeptide is Light-independent protochlorophyllide reductase iron-sulfur ATP-binding protein (Rubrivivax gelatinosus (strain NBRC 100245 / IL144)).